Here is a 115-residue protein sequence, read N- to C-terminus: Protein Wnt-2 (115 aa).

The O-palmitoleoyl serine; by PORCN moiety is linked to residue serine 1. Cysteine 81 and cysteine 96 form a disulfide bridge. Asparagine 82 carries an N-linked (GlcNAc...) asparagine glycan.

The protein belongs to the Wnt family. Post-translationally, palmitoleoylation is required for efficient binding to frizzled receptors. Depalmitoleoylation leads to Wnt signaling pathway inhibition.

The protein resides in the secreted. It is found in the extracellular space. The protein localises to the extracellular matrix. Ligand for members of the frizzled family of seven transmembrane receptors. Probable developmental protein. May be a signaling molecule which affects the development of discrete regions of tissues. Is likely to signal over only few cell diameters. This chain is Protein Wnt-2 (WNT-2), found in Strongylocentrotus purpuratus (Purple sea urchin).